We begin with the raw amino-acid sequence, 485 residues long: Aldehyde dehydrogenase family 3 member A2 (485 aa).

Topologically, residues 1-463 (MELEVRRVRQ…FLLKRFNKEK (463 aa)) are cytoplasmic. Residue 185–190 (GNTAVG) coordinates NAD(+). Active-site residues include E207 and C241. The residue at position 293 (S293) is a Phosphoserine. Residues 464–484 (LGLLLLTFLGIVAAVLVKAEY) form a helical membrane-spanning segment. The Prevents secretion from ER motif lies at 481–484 (KAEY).

Belongs to the aldehyde dehydrogenase family. As to quaternary structure, homodimer.

It is found in the microsome membrane. The protein resides in the endoplasmic reticulum membrane. The enzyme catalyses an aldehyde + NAD(+) + H2O = a carboxylate + NADH + 2 H(+). It catalyses the reaction a fatty aldehyde + NAD(+) + H2O = a fatty acid + NADH + 2 H(+). The catalysed reaction is (2E)-hexadecenal + NAD(+) + H2O = (E)-hexadec-2-enoate + NADH + 2 H(+). It carries out the reaction hexadecanoate + NADH + 2 H(+) = hexadecanal + NAD(+) + H2O. The enzyme catalyses 22-oxodocosanoate + NAD(+) + H2O = docosanedioate + NADH + 2 H(+). It catalyses the reaction 2,6,10,14-tetramethylpentadecanal + NAD(+) + H2O = 2,6,10,14-tetramethylpentadecanoate + NADH + 2 H(+). The catalysed reaction is octadecanal + NAD(+) + H2O = octadecanoate + NADH + 2 H(+). It carries out the reaction dodecanoate + NADH + 2 H(+) = dodecanal + NAD(+) + H2O. The enzyme catalyses decanal + NAD(+) + H2O = decanoate + NADH + 2 H(+). It catalyses the reaction tetradecanal + NAD(+) + H2O = tetradecanoate + NADH + 2 H(+). The catalysed reaction is octanal + NAD(+) + H2O = octanoate + NADH + 2 H(+). It carries out the reaction heptanal + NAD(+) + H2O = heptanoate + NADH + 2 H(+). The enzyme catalyses (2E,6E)-farnesal + NAD(+) + H2O = (2E,6E)-farnesoate + NADH + 2 H(+). Catalyzes the oxidation of medium and long-chain aliphatic aldehydes to fatty acids. Active on a variety of saturated and unsaturated aliphatic aldehydes between 6 and 24 carbons in length. Responsible for conversion of the sphingosine 1-phosphate (S1P) degradation product hexadecenal to hexadecenoic acid. This is Aldehyde dehydrogenase family 3 member A2 (ALDH3A2) from Pongo abelii (Sumatran orangutan).